The sequence spans 1277 residues: Myosin-1 (1277 aa).

A compositionally biased stretch (basic residues) spans 1-13 (MAPSKKAGKKVTP). Residues 1 to 27 (MAPSKKAGKKVTPKKAAGNNAKSKVAK) form a disordered region. The Myosin motor domain occupies 39–718 (VGVTDMTLLT…TLFALETMRD (680 aa)). An ATP-binding site is contributed by 132 to 139 (GESGAGKT). S360 carries the phosphoserine modification. The interval 407–489 (IIGILDIFGF…PGIFAALNDA (83 aa)) is actin-binding. Residues 567 to 587 (LFPDRPDPNSKKRPPTASDRI) are disordered. IQ domains are found at residues 722–742 (HNMA…KHEC) and 743–768 (ARRI…YGHQ). Positions 776-965 (RRRFSLLSYR…TVHVPSGEPA (190 aa)) constitute a TH1 domain. 2 disordered regions span residues 952–1072 (YKSH…AEPE) and 1129–1259 (PKAA…GPGQ). Residues 1015 to 1056 (PAVATPSVVSTPAAAAVVSKPKPAASTPAAVRAPAVTPAARS) show a composition bias toward low complexity. The span at 1057–1068 (VPPPPPPPPPAR) shows a compositional bias: pro residues. In terms of domain architecture, SH3 spans 1071-1129 (PEKEMYRAKFDFQGQEGEMSLTKDDEVELIEKDENGWWLVKKDGVEAWAPYNYLERIAP). Pro residues predominate over residues 1132-1142 (APAPPPPPARP). 2 stretches are compositionally biased toward polar residues: residues 1145 to 1159 (TSTV…TTAD) and 1185 to 1197 (AATT…SSRP). A compositionally biased stretch (pro residues) spans 1204–1224 (VPPPVAAKPKPPVVAPKPGVP). Residues 1226-1240 (PGGKPALPTTARPAP) are compositionally biased toward low complexity. Gly residues predominate over residues 1241 to 1258 (SGGGAAAGRLGGGGGGPG).

It belongs to the TRAFAC class myosin-kinesin ATPase superfamily. Myosin family. Phosphorylation of the TEDS site (Ser-360) is required for the polarization of the actin cytoskeleton. Phosphorylation probably activates the myosin-I ATPase activity.

It localises to the cytoplasm. The protein resides in the cytoskeleton. Its subcellular location is the actin patch. Functionally, type-I myosin implicated in the organization of the actin cytoskeleton. Required for proper actin cytoskeleton polarization. At the cell cortex, assembles in patch-like structures together with proteins from the actin-polymerizing machinery and promotes actin assembly. Functions as actin nucleation-promoting factor (NPF) for the Arp2/3 complex. This Coprinopsis cinerea (strain Okayama-7 / 130 / ATCC MYA-4618 / FGSC 9003) (Inky cap fungus) protein is Myosin-1 (MYO1).